Consider the following 267-residue polypeptide: Imidazole glycerol phosphate synthase subunit HisF (267 aa).

Catalysis depends on residues Asp22 and Asp141.

This sequence belongs to the HisA/HisF family. As to quaternary structure, heterodimer of HisH and HisF.

Its subcellular location is the cytoplasm. It carries out the reaction 5-[(5-phospho-1-deoxy-D-ribulos-1-ylimino)methylamino]-1-(5-phospho-beta-D-ribosyl)imidazole-4-carboxamide + L-glutamine = D-erythro-1-(imidazol-4-yl)glycerol 3-phosphate + 5-amino-1-(5-phospho-beta-D-ribosyl)imidazole-4-carboxamide + L-glutamate + H(+). It functions in the pathway amino-acid biosynthesis; L-histidine biosynthesis; L-histidine from 5-phospho-alpha-D-ribose 1-diphosphate: step 5/9. Functionally, IGPS catalyzes the conversion of PRFAR and glutamine to IGP, AICAR and glutamate. The HisF subunit catalyzes the cyclization activity that produces IGP and AICAR from PRFAR using the ammonia provided by the HisH subunit. The chain is Imidazole glycerol phosphate synthase subunit HisF from Mycobacterium tuberculosis (strain ATCC 25177 / H37Ra).